The chain runs to 163 residues: Fatty acid-binding protein homolog (163 aa).

The signal sequence occupies residues 1-23 (MRCLVALILTVLIVTPEVEAKTL).

Belongs to the calycin superfamily. Fatty-acid binding protein (FABP) family. Abundant in the fluid surrounding the developing embryo of Ascaris suum.

May play a role in sequestering potentially toxic fatty acids and their peroxidation products, or it may be involved in the maintenance of the impermeable lipid layer of the eggshell. This is Fatty acid-binding protein homolog from Ascaris suum (Pig roundworm).